Reading from the N-terminus, the 382-residue chain is V-type proton ATPase subunit C 1 (382 aa).

Thr2 is subject to N-acetylthreonine.

This sequence belongs to the V-ATPase C subunit family. In terms of assembly, V-ATPase is a heteromultimeric enzyme made up of two complexes: the ATP-hydrolytic V1 complex and the proton translocation V0 complex. The V1 complex consists of three catalytic AB heterodimers that form a heterohexamer, three peripheral stalks each consisting of EG heterodimers, one central rotor including subunits D and F, and the regulatory subunits C and H. The proton translocation complex V0 consists of the proton transport subunit a, a ring of proteolipid subunits c9c'', rotary subunit d, subunits e and f, and the accessory subunits ATP6AP1/Ac45 and ATP6AP2/PRR. As to expression, ubiquitous. Abundant in brain, liver, kidney and testis.

It is found in the cytoplasmic vesicle. The protein resides in the secretory vesicle. Its subcellular location is the synaptic vesicle membrane. The protein localises to the clathrin-coated vesicle membrane. In terms of biological role, subunit of the V1 complex of vacuolar(H+)-ATPase (V-ATPase), a multisubunit enzyme composed of a peripheral complex (V1) that hydrolyzes ATP and a membrane integral complex (V0) that translocates protons. V-ATPase is responsible for acidifying and maintaining the pH of intracellular compartments and in some cell types, is targeted to the plasma membrane, where it is responsible for acidifying the extracellular environment. Subunit C is necessary for the assembly of the catalytic sector of the enzyme and is likely to have a specific function in its catalytic activity. The polypeptide is V-type proton ATPase subunit C 1 (Atp6v1c1) (Mus musculus (Mouse)).